An 872-amino-acid chain; its full sequence is Alanine--tRNA ligase (872 aa).

Residues His-567, His-571, Cys-669, and His-673 each coordinate Zn(2+).

Belongs to the class-II aminoacyl-tRNA synthetase family. The cofactor is Zn(2+).

The protein resides in the cytoplasm. The catalysed reaction is tRNA(Ala) + L-alanine + ATP = L-alanyl-tRNA(Ala) + AMP + diphosphate. Its function is as follows. Catalyzes the attachment of alanine to tRNA(Ala) in a two-step reaction: alanine is first activated by ATP to form Ala-AMP and then transferred to the acceptor end of tRNA(Ala). Also edits incorrectly charged Ser-tRNA(Ala) and Gly-tRNA(Ala) via its editing domain. The chain is Alanine--tRNA ligase from Streptococcus pyogenes serotype M5 (strain Manfredo).